Here is a 62-residue protein sequence, read N- to C-terminus: Large ribosomal subunit protein bL28 (62 aa).

This sequence belongs to the bacterial ribosomal protein bL28 family.

This chain is Large ribosomal subunit protein bL28, found in Helicobacter pylori (strain HPAG1).